A 252-amino-acid chain; its full sequence is tRNA uridine(34) hydroxylase (252 aa).

In terms of domain architecture, Rhodanese spans 129–223 (QGRPVVMLDT…YFEETGGKGF (95 aa)). Residue Cys183 is the Cysteine persulfide intermediate of the active site.

Belongs to the TrhO family.

It catalyses the reaction uridine(34) in tRNA + AH2 + O2 = 5-hydroxyuridine(34) in tRNA + A + H2O. Its function is as follows. Catalyzes oxygen-dependent 5-hydroxyuridine (ho5U) modification at position 34 in tRNAs. The protein is tRNA uridine(34) hydroxylase of Bordetella petrii (strain ATCC BAA-461 / DSM 12804 / CCUG 43448).